A 108-amino-acid polypeptide reads, in one-letter code: Large ribosomal subunit protein uL23 (108 aa).

It belongs to the universal ribosomal protein uL23 family. Part of the 50S ribosomal subunit. Contacts protein L29, and trigger factor when it is bound to the ribosome.

One of the early assembly proteins it binds 23S rRNA. One of the proteins that surrounds the polypeptide exit tunnel on the outside of the ribosome. Forms the main docking site for trigger factor binding to the ribosome. The protein is Large ribosomal subunit protein uL23 of Mycoplasmoides gallisepticum (strain R(low / passage 15 / clone 2)) (Mycoplasma gallisepticum).